The sequence spans 1344 residues: Centrosomal P4.1-associated protein (1344 aa).

2 disordered regions span residues 67–123 (SSEE…NNDL) and 187–225 (PGTL…ASNV). Residues 211–225 (SYSNPTQENSCASNV) show a composition bias toward polar residues. The residue at position 248 (Ser-248) is a Phosphoserine. Positions 257–300 (QEAHVKRNDLKEESPAHPSGEGALPRWEKKMGRSQEGKDVNLQK) are disordered. Basic and acidic residues-rich tracts occupy residues 259–271 (AHVK…EESP) and 282–297 (RWEK…KDVN). Residue Ser-304 is modified to Phosphoserine. The segment at 307–382 (VVNIDERPIK…FTNAKSKFQK (76 aa)) is alpha/beta-tubulin binding. 2 disordered regions span residues 347-407 (QEAE…DRQH) and 425-470 (TVKK…KKRD). Residues 388–398 (LASTQSPSEDQ) show a composition bias toward polar residues. At Ser-528 the chain carries Phosphoserine. Phosphoserine; by PLK2 is present on residues Ser-577 and Ser-583. Disordered regions lie at residues 600 to 626 (RLSS…SNCS) and 672 to 735 (TSEI…DTGA). Basic and acidic residues predominate over residues 709–720 (VGDRVFSNREDS). The residue at position 748 (Ser-748) is a Phosphoserine. The tract at residues 887 to 1344 (QPPEFMVCFI…DGNVLMDTEM (458 aa)) is interaction with STIL. Positions 1105–1133 (QGNLSRRIKSAPPRDLGSSDKGQAALPRE) are disordered.

It belongs to the TCP10 family. Forms homodimers. Associates with microtubules plus ends; binds to beta-tubulin subunits exposed on microtubule outer surface at its distal tip; also associates with microtubule lattice. Associated with the gamma-tubulin complex. Interacts with the head domain of EPB41. Interacts with LYST. Interacts with CEP152 (via C-terminus). Interacts with STIL. Forms a complex with STIL and SASS6. Post-translationally, phosphorylation at Ser-577 and Ser-583 by PLK2 is required for procentriole formation and centriole elongation. Phosphorylation by PLK2 oscillates during the cell cycle: it increases at G1/S transition and decreases during the exit from mitosis. Phosphorylation at Ser-583 is also mediated by PLK4 but is not a critical step in PLK4 function in procentriole assembly.

The protein localises to the cytoplasm. It localises to the cytoskeleton. The protein resides in the microtubule organizing center. It is found in the centrosome. Its subcellular location is the centriole. Functionally, plays an important role in cell division and centrosome function by participating in centriole duplication. Inhibits microtubule nucleation from the centrosome. Involved in the regulation of slow processive growth of centriolar microtubules. Acts as microtubule plus-end tracking protein that stabilizes centriolar microtubules and inhibits microtubule polymerization and extension from the distal ends of centrioles. Required for centriole elongation and for STIL-mediated centriole amplification. Required for the recruitment of CEP295 to the proximal end of new-born centrioles at the centriolar microtubule wall during early S phase in a PLK4-dependent manner. May be involved in the control of centriolar-microtubule growth by acting as a regulator of tubulin release. The sequence is that of Centrosomal P4.1-associated protein (Cpap) from Mus musculus (Mouse).